The primary structure comprises 277 residues: Caspase-3 (277 aa).

M1 is subject to N-acetylmethionine. 2 consecutive propeptides follow at residues 1–9 (MENNKTSVD) and 10–28 (SKSI…KSMD). K11 is subject to N6-acetyllysine. A Phosphoserine modification is found at S26. Active-site residues include H121 and C163. C163 is modified (S-nitrosocysteine; in inhibited form).

Belongs to the peptidase C14A family. As to quaternary structure, heterotetramer that consists of two anti-parallel arranged heterodimers, each one formed by a 17 kDa (p17) and a 12 kDa (p12) subunit. Interacts with BIRC6/bruce. In terms of assembly, (Microbial infection) Subunit p17 interacts with African swine fever virus (ASFV) inhibitor of apoptosis protein. Cleavage by granzyme B, caspase-6, caspase-8 and caspase-10 generates the two active subunits. Additional processing of the propeptides is likely due to the autocatalytic activity of the activated protease. Active heterodimers between the small subunit of caspase-7 protease and the large subunit of caspase-3 also occur and vice versa. Post-translationally, S-nitrosylated on its catalytic site cysteine in unstimulated cell lines and denitrosylated upon activation of the Fas apoptotic pathway, associated with an increase in intracellular caspase activity. Fas therefore activates caspase-3 not only by inducing the cleavage of the caspase zymogen to its active subunits, but also by stimulating the denitrosylation of its active site thiol. In terms of processing, ubiquitinated by BIRC6; this activity is inhibited by DIABLO/SMAC.

It localises to the cytoplasm. It carries out the reaction Strict requirement for an Asp residue at positions P1 and P4. It has a preferred cleavage sequence of Asp-Xaa-Xaa-Asp-|- with a hydrophobic amino-acid residue at P2 and a hydrophilic amino-acid residue at P3, although Val or Ala are also accepted at this position.. Inhibited by BIRC6; following inhibition of BIRC6-caspase binding by DIABLO/SMAC, BIRC6 is subjected to caspase cleavage, leading to an increase in active caspases. In terms of biological role, involved in the activation cascade of caspases responsible for apoptosis execution. At the onset of apoptosis, it proteolytically cleaves poly(ADP-ribose) polymerase PARP1 at a '216-Asp-|-Gly-217' bond. Cleaves and activates sterol regulatory element binding proteins (SREBPs) between the basic helix-loop-helix leucine zipper domain and the membrane attachment domain. Cleaves and activates caspase-6, -7 and -9 (CASP6, CASP7 and CASP9, respectively). Cleaves and inactivates interleukin-18 (IL18). Triggers cell adhesion in sympathetic neurons through RET cleavage. Cleaves IL-1 beta between an Asp and an Ala, releasing the mature cytokine which is involved in a variety of inflammatory processes. Cleaves and inhibits serine/threonine-protein kinase AKT1 in response to oxidative stress. Acts as an inhibitor of type I interferon production during virus-induced apoptosis by mediating cleavage of antiviral proteins CGAS, IRF3 and MAVS, thereby preventing cytokine overproduction. Also involved in pyroptosis by mediating cleavage and activation of gasdermin-E (GSDME). Cleaves XRCC4 and phospholipid scramblase proteins XKR4, XKR8 and XKR9, leading to promote phosphatidylserine exposure on apoptotic cell surface. Cleaves BIRC6 following inhibition of BIRC6-caspase binding by DIABLO/SMAC. In Sus scrofa (Pig), this protein is Caspase-3 (CASP3).